Reading from the N-terminus, the 569-residue chain is Urease subunit alpha (569 aa).

Residues 131–569 (GAIDSHIHFI…LPLAQRYLLL (439 aa)) enclose the Urease domain. Residues His-136, His-138, and Lys-219 each contribute to the Ni(2+) site. N6-carboxylysine is present on Lys-219. His-221 is a binding site for substrate. 2 residues coordinate Ni(2+): His-248 and His-274. His-322 acts as the Proton donor in catalysis. Residue Asp-362 coordinates Ni(2+).

The protein belongs to the metallo-dependent hydrolases superfamily. Urease alpha subunit family. Heterotrimer of UreA (gamma), UreB (beta) and UreC (alpha) subunits. Three heterotrimers associate to form the active enzyme. It depends on Ni cation as a cofactor. In terms of processing, carboxylation allows a single lysine to coordinate two nickel ions.

It is found in the cytoplasm. It carries out the reaction urea + 2 H2O + H(+) = hydrogencarbonate + 2 NH4(+). Its pathway is nitrogen metabolism; urea degradation; CO(2) and NH(3) from urea (urease route): step 1/1. The protein is Urease subunit alpha of Prochlorococcus marinus (strain NATL1A).